The chain runs to 236 residues: tRNA (guanine-N(7)-)-methyltransferase (236 aa).

Over residues 1–17 the composition is skewed to basic and acidic residues; it reads MSERKSDPDRDDSERAF. The disordered stretch occupies residues 1–23; the sequence is MSERKSDPDRDDSERAFFGRRKG. S-adenosyl-L-methionine-binding residues include glutamate 67, glutamate 92, aspartate 119, and aspartate 141. Residue aspartate 141 is part of the active site. Lysine 145 and aspartate 177 together coordinate substrate.

It belongs to the class I-like SAM-binding methyltransferase superfamily. TrmB family.

It catalyses the reaction guanosine(46) in tRNA + S-adenosyl-L-methionine = N(7)-methylguanosine(46) in tRNA + S-adenosyl-L-homocysteine. The protein operates within tRNA modification; N(7)-methylguanine-tRNA biosynthesis. Functionally, catalyzes the formation of N(7)-methylguanine at position 46 (m7G46) in tRNA. The polypeptide is tRNA (guanine-N(7)-)-methyltransferase (Bradyrhizobium diazoefficiens (strain JCM 10833 / BCRC 13528 / IAM 13628 / NBRC 14792 / USDA 110)).